The primary structure comprises 520 residues: Mitogen-activated protein kinase kinase 3 (520 aa).

Position 69 is a phosphoserine (S69). One can recognise a Protein kinase domain in the interval 83-339 (MRVFGAIGSG…ADQLLSHPFI (257 aa)). ATP is bound by residues 89–97 (IGSGASSVV) and K112. D207 serves as the catalytic Proton acceptor. S235 is subject to Phosphoserine. Phosphothreonine is present on residues T241 and T245. The 151-residue stretch at 366–516 (LADMLTIHYY…YFLAKQELYI (151 aa)) folds into the NTF2 domain.

The protein belongs to the protein kinase superfamily. STE Ser/Thr protein kinase family. MAP kinase kinase subfamily. Interacts with MPK1, MPK2 and MPK7. Interacts with P.syringae type III effector HopF2. Interacts with MPK14. Binds to MAPKKK17 and MAPKKK18. Binds to MAPKKK20. In terms of processing, phosphorylation at Ser-235 and Thr-241 by MAP kinase kinase kinases positively regulates kinase activity. Phosphorylated by MAPKKK20. As to expression, mostly expressed in leaves, and, to a lower extent, in roots, seedlings, flower buds, flowers and siliques.

The protein resides in the nucleus. The protein localises to the cytoplasm. The catalysed reaction is L-seryl-[protein] + ATP = O-phospho-L-seryl-[protein] + ADP + H(+). It carries out the reaction L-threonyl-[protein] + ATP = O-phospho-L-threonyl-[protein] + ADP + H(+). It catalyses the reaction L-tyrosyl-[protein] + ATP = O-phospho-L-tyrosyl-[protein] + ADP + H(+). MKK3-MPK6 module plays an important role in the jasmonate signal transduction pathway through the negative regulation of MYC2/JIN1 expression. Activates by phosphorylation the downstream MPK6, MPK7 and MPK8. MKK3-MPK7 module acts as a positive regulator of PR1 gene expression. MKK3-MPK8 module negatively regulates ROS accumulation through controlling expression of the RBOHD gene. Component of the abscisic acid (ABA) signaling pathway that may act as ABA signal transducer in the context of abiotic stresses. Activator of the C group MAP kinases. Activates MPK7 in response to ABA. Mitogen-activated protein kinase (MAPK) that is specifically regulated by MAPKKK20 and mediates signaling that regulates cortical microtubule functions. The polypeptide is Mitogen-activated protein kinase kinase 3 (Arabidopsis thaliana (Mouse-ear cress)).